Consider the following 266-residue polypeptide: Indole-3-glycerol phosphate synthase (266 aa).

The protein belongs to the TrpC family.

The enzyme catalyses 1-(2-carboxyphenylamino)-1-deoxy-D-ribulose 5-phosphate + H(+) = (1S,2R)-1-C-(indol-3-yl)glycerol 3-phosphate + CO2 + H2O. The protein operates within amino-acid biosynthesis; L-tryptophan biosynthesis; L-tryptophan from chorismate: step 4/5. The polypeptide is Indole-3-glycerol phosphate synthase (Variovorax paradoxus (strain S110)).